We begin with the raw amino-acid sequence, 629 residues long: MGYNAGSYDVIVIGAGHAGCEAGLAAARMGSKTLMLTINLDMVAFMPCNPSVGGPAKGIVVREIDALGGEMGRNIDKTHIQMRMLNTGKGPAVRALRAQADKFSYQHELKKTIEETPNLTLFQGMVERLIVEDGECKGVITQAGAEYTAKTVVITTGTFLRGEIIMGDLKYSSGPNNQQPSITLSEHLEELGFDLVRFKTGTPPRVNSNTIDYSKTEIQPGDDKPRAFSFETTKFIMDQIPCWLTYTSTETHRLIDENLHRSAMYSGMIKGTGPRYCPSIEDKVVRFNDKPRHQIFLEPEGRNTQEVYVQGLSTSLPEDVQRDMLRTIPGLENVEMMRTGYAIEYDAIVPTQLWPTLETKKIKNLYTAGQINGTSGYEEAAGQGLMAGINAACRSLGKKEVILGREDAYIGVLIDDLVTKGTNEPYRLLTSRAEYRLLLRHDNADLRLTEIGREIGLITEERYERFTNKKLQIEQEKERLSSIIIKPRPEVQELIRNIGGSELKDGIRASDLLRRPEMTYEHIHLLVPSEVELSDEVKEQVEIQIKYEGYIEKSLQQVERMKKMENKKIPVDIDYDAISSLASEARQKLKDVRPLSMGQASRISGVNPADISILLVYIEQGKIARVSNQ.

Residues 14-19, Val-126, and Ser-181 contribute to the FAD site; that span reads GAGHAG. Residue 273–287 participates in NAD(+) binding; the sequence is GPRYCPSIEDKVVRF. Residue Gln-370 participates in FAD binding.

Belongs to the MnmG family. In terms of assembly, homodimer. Heterotetramer of two MnmE and two MnmG subunits. Requires FAD as cofactor.

Its subcellular location is the cytoplasm. In terms of biological role, NAD-binding protein involved in the addition of a carboxymethylaminomethyl (cmnm) group at the wobble position (U34) of certain tRNAs, forming tRNA-cmnm(5)s(2)U34. The sequence is that of tRNA uridine 5-carboxymethylaminomethyl modification enzyme MnmG from Bacillus cereus (strain ZK / E33L).